We begin with the raw amino-acid sequence, 448 residues long: 4-hydroxybenzoate transporter PcaK (448 aa).

Residues 1–30 lie on the Cytoplasmic side of the membrane; that stretch reads MNQAQNSVGKSLDVQSFINQQPLSRYQWRV. A helical transmembrane segment spans residues 31 to 51; sequence VLLCFLIVFLDGLDTAAMGFI. Over 52 to 67 the chain is Periplasmic; that stretch reads APALSQEWGIDRASLG. The helical transmembrane segment at 68-88 threads the bilayer; that stretch reads PVMSAALIGMVFGALGSGPLA. The Cytoplasmic segment spans residues 89–94; the sequence is DRFGRK. The helical transmembrane segment at 95 to 115 threads the bilayer; it reads GVLVGAVLVFGGFSLASAYAT. Residues 116-119 are Periplasmic-facing; sequence NVDQ. Residues 120 to 140 traverse the membrane as a helical segment; that stretch reads LLVLRFLTGLGLGAGMPNATT. Over 141–152 the chain is Cytoplasmic; that stretch reads LLSEYTPERLKS. A helical membrane pass occupies residues 153–173; it reads LLVTSMFCGFNLGMAGGGFIS. Over 174-184 the chain is Periplasmic; sequence AKMIPAYGWHS. A helical membrane pass occupies residues 185–205; sequence LLVIGGVLPLLLALVLMVWLP. Over 206–261 the chain is Cytoplasmic; that stretch reads ESARFLVVRNRGTDKIRKTLSPIAPQVVAEAGSFSVPEQKAVAARSVFAVIFSGTY. Residues 262 to 282 traverse the membrane as a helical segment; that stretch reads GLGTMLLWLTYFMGLVIVYLL. At 283 to 301 the chain is on the periplasmic side; that stretch reads TSWLPTLMRDSGASMEQAA. A helical transmembrane segment spans residues 302 to 322; the sequence is FIGALFQFGGVLSAVGVGWAM. Over 323–329 the chain is Cytoplasmic; it reads DRYNPHK. A helical transmembrane segment spans residues 330–350; the sequence is VIGIFYLLAGVFAYAVGQSLG. Residue Asn351 is a topological domain, periplasmic. The helical transmembrane segment at 352 to 372 threads the bilayer; the sequence is ITVLATLVLIAGMCVNGAQSA. Over 373-398 the chain is Cytoplasmic; that stretch reads MPSLAARFYPTQGRATGVSWMLGIGR. Residues 399 to 419 form a helical membrane-spanning segment; sequence FGAILGAWSGATLLGLGWNFE. Topologically, residues 420-421 are periplasmic; that stretch reads QV. Residues 422–442 traverse the membrane as a helical segment; sequence LTALLVPAALATVGVIVKGLV. At 443–448 the chain is on the cytoplasmic side; it reads SHADAT.

It belongs to the major facilitator superfamily. Aromatic acid:H(+) symporter (AAHS) (TC 2.A.1.15) family.

The protein resides in the cell inner membrane. Its function is as follows. Transports 4-hydroxybenzoate (4-HBA) and protocatechuate across the membrane. Driven by the proton motive force. Also functions as a chemoreceptor, which is required for chemotaxis to aromatic acids. This is 4-hydroxybenzoate transporter PcaK (pcaK) from Pseudomonas putida (Arthrobacter siderocapsulatus).